A 278-amino-acid polypeptide reads, in one-letter code: Small ribosomal subunit protein uS2 (278 aa).

Positions 235-278 (QRRKDHGEGGQQAAGGGRGQRDEINVYQGGRGGRGGGPRQQQAS) are disordered. Composition is skewed to gly residues over residues 243 to 252 (GGQQAAGGGR) and 263 to 272 (GGRGGRGGGP).

It belongs to the universal ribosomal protein uS2 family.

In Sorangium cellulosum (strain So ce56) (Polyangium cellulosum (strain So ce56)), this protein is Small ribosomal subunit protein uS2.